A 529-amino-acid polypeptide reads, in one-letter code: Bifunctional purine biosynthesis protein PurH (529 aa).

One can recognise an MGS-like domain in the interval 1–148 (MQQRRPIRRA…KNHKDVAIVV (148 aa)).

Belongs to the PurH family.

The enzyme catalyses (6R)-10-formyltetrahydrofolate + 5-amino-1-(5-phospho-beta-D-ribosyl)imidazole-4-carboxamide = 5-formamido-1-(5-phospho-D-ribosyl)imidazole-4-carboxamide + (6S)-5,6,7,8-tetrahydrofolate. It carries out the reaction IMP + H2O = 5-formamido-1-(5-phospho-D-ribosyl)imidazole-4-carboxamide. The protein operates within purine metabolism; IMP biosynthesis via de novo pathway; 5-formamido-1-(5-phospho-D-ribosyl)imidazole-4-carboxamide from 5-amino-1-(5-phospho-D-ribosyl)imidazole-4-carboxamide (10-formyl THF route): step 1/1. Its pathway is purine metabolism; IMP biosynthesis via de novo pathway; IMP from 5-formamido-1-(5-phospho-D-ribosyl)imidazole-4-carboxamide: step 1/1. The sequence is that of Bifunctional purine biosynthesis protein PurH from Yersinia pseudotuberculosis serotype IB (strain PB1/+).